Here is a 291-residue protein sequence, read N- to C-terminus: Basic helix-loop-helix protein 80 (291 aa).

A disordered region spans residues 65–120 (SAVLDTSPSVDRKRKAAEDSAHSKDSCKDGKSRRGKKASKEVEEKSTTEDEPPKGY). The segment covering 80 to 117 (AAEDSAHSKDSCKDGKSRRGKKASKEVEEKSTTEDEPP) has biased composition (basic and acidic residues). The Nuclear localization signal signature appears at 125–132 (ARRGQATD). The tract at residues 129–142 (QATDSHSLAERVRR) is basic motif; degenerate. The 51-residue stretch at 129 to 179 (QATDSHSLAERVRRERISERMRMLQALVPGCDKVTGKALILDEIINYVQSL) folds into the bHLH domain. The segment at 143–179 (ERISERMRMLQALVPGCDKVTGKALILDEIINYVQSL) is helix-loop-helix motif.

It belongs to the bHLH protein family. Homodimer. Interacts with IBH1, BC1 and LO9-177.

It localises to the nucleus. Its function is as follows. Together with BCL2, positive regulator of cell elongation at least partially through increased gibberellic acid (GA) biosynthesis. In Oryza sativa subsp. indica (Rice), this protein is Basic helix-loop-helix protein 80.